The primary structure comprises 688 residues: Complement C1s-1 subcomponent (688 aa).

The first 15 residues, 1–15 (MWYLVLFSLLASFSA), serve as a signal peptide directing secretion. The region spanning 16–130 (EPTMHGEILS…TGFAAYYTAI (115 aa)) is the CUB 1 domain. 6 residues coordinate Ca(2+): Glu60, Asp68, Asp113, Asp131, Val132, and Glu134. Cysteines 65 and 83 form a disulfide. One can recognise an EGF-like; calcium-binding domain in the interval 131–172 (DVNECTDFTDVPCSHFCNNFIGGYFCSCPPEYFLHDDMRNCG). Intrachain disulfides connect Cys135-Cys147, Cys143-Cys156, and Cys158-Cys171. Ca(2+) is bound by residues Asn149, Phe150, and Gly153. A (3R)-3-hydroxyasparagine modification is found at Asn149. Asn174 is a glycosylation site (N-linked (GlcNAc...) asparagine). A disulfide bridge connects residues Cys175 and Cys202. The CUB 2 domain occupies 175-290 (CSGDVFTALI…KGWKLRYHGD (116 aa)). 5 residues coordinate Ca(2+): Glu226, Asp236, Asp275, Gly278, and Gln279. A disulfide bridge links Cys234 with Cys251. Sushi domains follow at residues 292 to 356 (ISCP…KCQP) and 357 to 423 (VYCG…RCIP). 7 disulfides stabilise this stretch: Cys294–Cys341, Cys321–Cys354, Cys359–Cys403, Cys386–Cys421, Cys425–Cys549, Cys595–Cys618, and Cys627–Cys659. In terms of domain architecture, Peptidase S1 spans 438–680 (IFGGQPAKIE…YVDWILKTMQ (243 aa)). Active-site charge relay system residues include His475 and Asp529. The active-site Charge relay system is Ser631.

Belongs to the peptidase S1 family. Core component of the complement C1 complex, a calcium-dependent complex composed of 1 molecule of the C1Q subcomplex, 2 molecules of C1R and 2 molecules of C1S. The C1Q subcomplex is composed 18 subunits: 3 chains of C1QA, C1QB, and C1QC trimerize to form 6 collagen-like triple helices connected to six globular ligand-recognition modules. In terms of processing, cleaved and activated by C1R to generate Complement C1s subcomponent heavy and light chains. The iron and 2-oxoglutarate dependent 3-hydroxylation of aspartate and asparagine is (R) stereospecific within EGF domains. In terms of tissue distribution, specifically expressed in male reproductive tissues.

It is found in the secreted. The protein resides in the cell surface. It carries out the reaction Cleavage of Arg-|-Ala bond in complement component C4 to form C4a and C4b, and Lys(or Arg)-|-Lys bond in complement component C2 to form C2a and C2b: the 'classical' pathway C3 convertase.. Its activity is regulated as follows. Cleaved and activated by C1R. Immunoglobulin-binding promotes autoactivation of C1R, which results in the cleavage of the Arg-Ile bond in the catalytic domain. Inhibited by C1 inhibitor (SERPING1). Functionally, component of the complement C1 complex, a multiprotein complex that initiates the classical pathway of the complement system, a cascade of proteins that leads to phagocytosis and breakdown of pathogens and signaling that strengthens the adaptive immune system. C1S is activated following association of the C1 complex with immunoglobulins (IgG or IgM) complexed with antigens to form antigen-antibody complexes on the surface of pathogens. C1S is cleaved and activated by C1R to generate C1s subcomponent heavy and light chains. C1s subcomponent light chain then cleaves and activates C2 and C4, the next components of the classical complement pathway. Serine protease component of the complement C1 complex, which catalyzes cleavage and activation of C2 and C4, the next components of the classical complement pathway. Also cleaves IGFBP5 and thereby inhibits the trophic effects of IGF1. This Mus musculus (Mouse) protein is Complement C1s-1 subcomponent.